The chain runs to 442 residues: MRRTRRPRFVLMNKMDDLNLHYRFLNWRRRIREIREVRAFRYQERFKHILVDGDTLSYHGNSGEVGCYVASRPLTKDSNYFEVSIVDSGVRGTIAVGLVPQYYSLDHQPGWLPDSVAYHADDGKLYNGRAKGRQFGSKCNSGDRIGCGIEPVSFDVQTAQIFFTKNGKRVGSTIMPMSPDGLFPAVGMHSLGEEVRLHLNAELGREDDSVMMVDSYEDEWGRLHDVRVCGTLLEYLGKGKSIVDVGLAQARHPLSTRSHYFEVEIVDPGEKCYIALGLARKDYPKNRHPGWSRGSVAYHADDGKIFHGSGVGDPFEPRCYKGDIMGCGIMFPRDYILDSEGDSDDSCDTVILSPTARAARNVRNVMYLHQEGEEEEEEEEEEEDGEEIEPEHEGRKVVVFFTRNGKIIGKKDAVVPSGGFFPTIGMLSCGEKVKVDLHPLSG.

In terms of domain architecture, B30.2/SPRY spans 17–204 (DLNLHYRFLN…VRLHLNAELG (188 aa)). Residues 371–394 (EGEEEEEEEEEEEDGEEIEPEHEG) are disordered. Positions 372–390 (GEEEEEEEEEEEDGEEIEP) are enriched in acidic residues.

The protein is SPRY domain-containing protein 3 (SPRYD3) of Pongo abelii (Sumatran orangutan).